A 169-amino-acid chain; its full sequence is Allophycocyanin subunit beta-18 (169 aa).

Asn-72 carries the N4-methylasparagine modification. Residue Cys-82 participates in (2R,3E)-phycocyanobilin binding.

This sequence belongs to the phycobiliprotein family. In terms of assembly, heterodimer of ApcE and this beta chain. Contains one covalently linked bilin chromophore.

It is found in the cellular thylakoid membrane. Its function is as follows. A variant beta-allophycocyanin (AP) which forms a complex with ApcE, a phycobilisome terminal emitter that influences energy transfer to photosystem II. This chain is Allophycocyanin subunit beta-18 (apcF), found in Synechocystis sp. (strain ATCC 27184 / PCC 6803 / Kazusa).